A 468-amino-acid polypeptide reads, in one-letter code: Tyrosine-protein phosphatase YopH (468 aa).

Positions 127-194 (ARGHVSSHSH…TVSPYGPEAR (68 aa)) are disordered. The span at 130-140 (HVSSHSHSVLH) shows a compositional bias: low complexity. Residues 152-461 (SHLDPRTPPL…DVLIKLAEGQ (310 aa)) enclose the Tyrosine-protein phosphatase domain. C403 acts as the Phosphocysteine intermediate in catalysis.

The protein belongs to the protein-tyrosine phosphatase family. Non-receptor class subfamily. As to quaternary structure, monomer.

The protein resides in the secreted. The catalysed reaction is O-phospho-L-tyrosyl-[protein] + H2O = L-tyrosyl-[protein] + phosphate. Essential virulence determinant. This protein is a protein tyrosine phosphatase. The essential function of YopH in Yersinia pathogenesis is host-protein dephosphorylation. It contributes to the ability of the bacteria to resist phagocytosis by peritoneal macrophages. The chain is Tyrosine-protein phosphatase YopH (yopH) from Yersinia enterocolitica.